Reading from the N-terminus, the 711-residue chain is Polyribonucleotide nucleotidyltransferase (711 aa).

Positions 486 and 492 each coordinate Mg(2+). Residues 553–612 (PRIHTIKINPDKIKDVIGKGGSVIRALTEETGTTIEIEDDGTVKIAATDGEKAKHAIRRI) enclose the KH domain. In terms of domain architecture, S1 motif spans 622–690 (GRVYTGKVTR…RQGRIRLSIK (69 aa)). Residues 689–711 (IKEATEQSQPAAAPEAPAAEQGE) form a disordered region. Low complexity predominate over residues 694–711 (EQSQPAAAPEAPAAEQGE).

The protein belongs to the polyribonucleotide nucleotidyltransferase family. Component of the RNA degradosome, which is a multiprotein complex involved in RNA processing and mRNA degradation. The cofactor is Mg(2+).

Its subcellular location is the cytoplasm. It catalyses the reaction RNA(n+1) + phosphate = RNA(n) + a ribonucleoside 5'-diphosphate. Involved in mRNA degradation. Catalyzes the phosphorolysis of single-stranded polyribonucleotides processively in the 3'- to 5'-direction. The protein is Polyribonucleotide nucleotidyltransferase of Shigella flexneri serotype 5b (strain 8401).